A 422-amino-acid chain; its full sequence is MQSLLLLATLLGSALGGAIPSQSANYNGYKVMRVSGDDTSKISHIVSKLGLETWKFPKAANANVDIVVPPKKVAEFEKMSHAAGLKKQVMHENLGDSIKSEMSFRPYSCELLTLDGGANDTWFQSYHKYEDHLKFMQDFQSAHSQNSEIVTSGKSHEGRDITGVHVWGSGEKGSKPAVVFHGTVHAREWITTMTVEYILAQLFDDKEAGAALLEKFDFYIFPIANPDGFVFTTESDRMWRKNREQNEGGCYGTDLNRNWPYKWEGDGSTTDPCSETYRGPSPGFAPETKASTSFIKGLADGAGVKMFVDWHSYSQLFMTPYGYSCSARAPNDDVLQEMASSFADAVKAVHGTSFTTGPICNTIYQANGNSVDWIVDEIKGETAFAAELRDTGMYGFVLPPEQIIPSGEETWAGVKAMFSKLK.

An N-terminal signal peptide occupies residues 1–16 (MQSLLLLATLLGSALG). The propeptide at 17–119 (GAIPSQSANY…ELLTLDGGAN (103 aa)) is activation peptide. The 297-residue stretch at 125–421 (SYHKYEDHLK…AGVKAMFSKL (297 aa)) folds into the Peptidase M14 domain. 2 residues coordinate Zn(2+): His185 and Glu188. Substrate contacts are provided by residues 185-188 (HARE), Arg240, and 256-257 (NR). Residues Cys250 and Cys273 are joined by a disulfide bond. Zn(2+) is bound at residue His311. 312–313 (SY) is a binding site for substrate. Glu387 functions as the Proton donor/acceptor in the catalytic mechanism.

This sequence belongs to the peptidase M14 family. The cofactor is Zn(2+).

It is found in the secreted. Its function is as follows. Extracellular metalloprotease that contributes to pathogenicity. This is Metallocarboxypeptidase A-like protein TRV_02598 from Trichophyton verrucosum (strain HKI 0517).